The sequence spans 561 residues: Arginine--tRNA ligase (561 aa).

Positions 119–129 (PNIAKPMSMGH) match the 'HIGH' region motif.

It belongs to the class-I aminoacyl-tRNA synthetase family. In terms of assembly, monomer.

The protein localises to the cytoplasm. It carries out the reaction tRNA(Arg) + L-arginine + ATP = L-arginyl-tRNA(Arg) + AMP + diphosphate. The sequence is that of Arginine--tRNA ligase from Lactobacillus acidophilus (strain ATCC 700396 / NCK56 / N2 / NCFM).